Consider the following 2894-residue polypeptide: uncharacterized protein (2894 aa).

The helical transmembrane segment at 8–28 threads the bilayer; the sequence is ISIFVFTILLLSNVSLGLNVS. 20 PbH1 repeats span residues 543 to 567, 2085 to 2107, 2135 to 2156, 2158 to 2180, 2201 to 2223, 2224 to 2244, 2245 to 2266, 2267 to 2289, 2290 to 2311, 2341 to 2363, 2367 to 2389, 2390 to 2419, 2422 to 2444, 2455 to 2477, 2479 to 2501, 2512 to 2542, 2550 to 2582, 2589 to 2611, 2612 to 2633, and 2638 to 2660; these read EVRW…DISL, NYPL…SMLN, FGNI…VLYK, GNGI…YSKN, ISSI…LLEN, SSSS…YLKE, NYIS…EIVN, SSNV…AIFN, GENV…LSYG, LNNL…FIYS, ASNV…YIYG, VNAI…KISG, TKGV…SLEG, VENN…YIGG, VENV…LIQE, GTNI…TVGA, NGYI…EVYG, SLEF…LIGA, SKDI…TIPN, and PYNI…DLDD.

It localises to the membrane. This is an uncharacterized protein from Methanocaldococcus jannaschii (strain ATCC 43067 / DSM 2661 / JAL-1 / JCM 10045 / NBRC 100440) (Methanococcus jannaschii).